The sequence spans 105 residues: Flagellar transcriptional regulator FlhD (105 aa).

This sequence belongs to the FlhD family. As to quaternary structure, homodimer; disulfide-linked. Forms a heterohexamer composed of two FlhC and four FlhD subunits. Each FlhC binds a FlhD dimer, forming a heterotrimer, and a hexamer assembles by dimerization of two heterotrimers.

Its subcellular location is the cytoplasm. Its function is as follows. Functions in complex with FlhC as a master transcriptional regulator that regulates transcription of several flagellar and non-flagellar operons by binding to their promoter region. Activates expression of class 2 flagellar genes, including fliA, which is a flagellum-specific sigma factor that turns on the class 3 genes. Also regulates genes whose products function in a variety of physiological pathways. In Cupriavidus necator (strain ATCC 17699 / DSM 428 / KCTC 22496 / NCIMB 10442 / H16 / Stanier 337) (Ralstonia eutropha), this protein is Flagellar transcriptional regulator FlhD.